The primary structure comprises 91 residues: Probable Fe(2+)-trafficking protein (91 aa).

Belongs to the Fe(2+)-trafficking protein family.

Could be a mediator in iron transactions between iron acquisition and iron-requiring processes, such as synthesis and/or repair of Fe-S clusters in biosynthetic enzymes. The protein is Probable Fe(2+)-trafficking protein of Ralstonia nicotianae (strain ATCC BAA-1114 / GMI1000) (Ralstonia solanacearum).